Consider the following 669-residue polypeptide: MASYTPKNILITGAAGFIASHVANRLIRSYPDYKIVVLDKLDYCSNLKNLNPSKHSPNFKFVKGDIASADLVNHLLITEGIDTIMHFAAQTHVDNSFGNSFEFTKNNIYGTHVLLEACKVTGQIRRFIHVSTDEVYGETDEDALVGNHEASQLLPTNPYSATKAGAEMLVMAYGRSYGLPVITTRGNNVYGPNQFPEKLIPKFILLAMRGQVLPIHGDGSNVRSYLYCEDVAEAFEVVLHKGEVGHVYNIGTKKERRVNDVAKDICKLFNMDPEANIKFVDNRPFNDQRYFLDDQKLKKLGWSERTTWEEGLKKTMDWYTQNPEWWGDVSGALLPHPRMLMMPGGRHFDGSEDNSLAATLSEKPSQTHMVVPSQRSNGTPQKPSLKFLIYGKTGWIGGLLGKICDKQGIAYEYGKGRLEDRSSLLQDIQSVKPTHVFNSAGVTGRPNVDWCESHKTETIRANVAGTLTLADVCREHGLLMMNFATGCIFEYDDKHPEGSGIGFKEEDTPNFTGSFYSKTKAMVEELLKEYDNVCTLRVRMPISSDLNNPRNFITKISRYNKVVNIPNSMTVLDELLPISIEMAKRNLKGIWNFTNPGVVSHNEILEMYRDYINPEFKWANFTLEEQAKVIVAPRSNNEMDASKLKKEFPELLSIKESLIKYAYGPNKKT.

13–19 serves as a coordination point for NAD(+); it reads GAAGFIA. Substrate is bound at residue Thr-132. Asp-133 serves as the catalytic Proton donor. Residues Glu-134 and Tyr-159 each act as proton acceptor in the active site. 391–397 lines the NADP(+) pocket; it reads GKTGWIG.

This sequence in the N-terminal section; belongs to the NAD(P)-dependent epimerase/dehydratase family. dTDP-glucose dehydratase subfamily. It in the C-terminal section; belongs to the dTDP-4-dehydrorhamnose reductase family. NAD(+) is required as a cofactor. Requires NADP(+) as cofactor. In terms of tissue distribution, expressed in roots, stems, leaves, seedlings, inflorescence tips, and siliques. Detected in the adaxial side of cotyledons, in the emerging leaves and in trichomes. Also detected in the root tip, more precisely in the epidermal cells in the meristematic and elongation zone.

Its subcellular location is the cytoplasm. The protein localises to the cytosol. It carries out the reaction UDP-alpha-D-glucose = UDP-4-dehydro-6-deoxy-alpha-D-glucose + H2O. It participates in carbohydrate biosynthesis. In terms of biological role, trifunctional enzyme involved in UDP-beta-L-rhamnose biosynthesis, a precursor of the primary cell wall components rhamnogalacturonan I (RG-I) and rhamnogalacturonan II (RG-II). Plays a major role in supplying UDP-rhamnose for flavonol biosynthesis. Catalyzes the dehydration of UDP-glucose to form UDP-4-dehydro-6-deoxy-D-glucose followed by the epimerization of the C3' and C5' positions of UDP-4-dehydro-6-deoxy-D-glucose to form UDP-4-keto-beta-L-rhamnose and the reduction of UDP-4-keto-beta-L-rhamnose to yield UDP-beta-L-rhamnose. The chain is Trifunctional UDP-glucose 4,6-dehydratase/UDP-4-keto-6-deoxy-D-glucose 3,5-epimerase/UDP-4-keto-L-rhamnose-reductase RHM1 from Arabidopsis thaliana (Mouse-ear cress).